We begin with the raw amino-acid sequence, 647 residues long: UvrABC system protein C (647 aa).

Residues 26 to 106 (SEPGCYLMRD…IKEHQPYFNI (81 aa)) form the GIY-YIG domain. Residues 216 to 251 (DQLKDLLHKQMLIQSKLQEFEKAAIIRDQIKGIEQL) form the UVR domain.

This sequence belongs to the UvrC family. In terms of assembly, interacts with UvrB in an incision complex.

Its subcellular location is the cytoplasm. The UvrABC repair system catalyzes the recognition and processing of DNA lesions. UvrC both incises the 5' and 3' sides of the lesion. The N-terminal half is responsible for the 3' incision and the C-terminal half is responsible for the 5' incision. This Prochlorococcus marinus (strain MIT 9211) protein is UvrABC system protein C.